The chain runs to 266 residues: MPDITLTTLQSLKLKGEKITMLTCYDATFAHASCQAGIEVLLVGDSLGMVLQGNDSTLPVTTDELAYHTASVKRGNDGAFIIADLPFMGYATLEQTFQNAGKLMQAGAHMIKVEGAVWLAESIRLLAERGVPVCAHMGLTPQSVNLLGGYKVQGRNEAQARQMRADAIALEQAGAAMILLECVPSELAAEITQAVKVPVIGIGAGSATDGQVLVLHDMLGLSITGRVPKFVKNFMTGQASIHDALSAYVAEVKGVTFPGAEHGFSA.

Residues Asp-45 and Asp-84 each contribute to the Mg(2+) site. Residues Asp-45–Ser-46, Asp-84, and Lys-112 each bind 3-methyl-2-oxobutanoate. A Mg(2+)-binding site is contributed by Glu-114. Glu-181 functions as the Proton acceptor in the catalytic mechanism.

This sequence belongs to the PanB family. As to quaternary structure, homodecamer; pentamer of dimers. Mg(2+) is required as a cofactor.

The protein resides in the cytoplasm. The enzyme catalyses 3-methyl-2-oxobutanoate + (6R)-5,10-methylene-5,6,7,8-tetrahydrofolate + H2O = 2-dehydropantoate + (6S)-5,6,7,8-tetrahydrofolate. It participates in cofactor biosynthesis; (R)-pantothenate biosynthesis; (R)-pantoate from 3-methyl-2-oxobutanoate: step 1/2. Functionally, catalyzes the reversible reaction in which hydroxymethyl group from 5,10-methylenetetrahydrofolate is transferred onto alpha-ketoisovalerate to form ketopantoate. The sequence is that of 3-methyl-2-oxobutanoate hydroxymethyltransferase from Pseudomonas fluorescens (strain SBW25).